A 443-amino-acid polypeptide reads, in one-letter code: Glucose-6-phosphate isomerase (443 aa).

Glu285 serves as the catalytic Proton donor. Catalysis depends on residues His306 and Lys420.

This sequence belongs to the GPI family.

The protein localises to the cytoplasm. It catalyses the reaction alpha-D-glucose 6-phosphate = beta-D-fructose 6-phosphate. It participates in carbohydrate biosynthesis; gluconeogenesis. It functions in the pathway carbohydrate degradation; glycolysis; D-glyceraldehyde 3-phosphate and glycerone phosphate from D-glucose: step 2/4. Catalyzes the reversible isomerization of glucose-6-phosphate to fructose-6-phosphate. The chain is Glucose-6-phosphate isomerase from Staphylococcus haemolyticus (strain JCSC1435).